The following is a 316-amino-acid chain: HTH-type transcriptional regulator cbl (316 aa).

Residues 1 to 59 enclose the HTH lysR-type domain; it reads MNFQQLKIIREAARQDYNLTEVANMLYTSQSGVSRHIRELEEELGIEIFIRRGKRLLGM. The H-T-H motif DNA-binding region spans 19 to 38; it reads LTEVANMLYTSQSGVSRHIR.

It belongs to the LysR transcriptional regulatory family.

May be an accessory regulatory protein within the cys regulon. In Klebsiella aerogenes (Enterobacter aerogenes), this protein is HTH-type transcriptional regulator cbl (cbl).